The following is a 464-amino-acid chain: Putative guanine nucleotide-binding protein subunit alpha (464 aa).

The 383-residue stretch at 33 to 415 folds into the G-alpha domain; it reads HSKLKRGDGP…ETKRDKYNEK (383 aa). The interval 36–49 is G1 motif; that stretch reads LKRGDGPGESGKST. GTP-binding positions include 41-48, 147-151, 214-220, 239-243, 268-271, and 310-313; these read GPGESGKS, DVGGQ, LRSRTKT, RNRD, and TSQS. Residue S48 participates in Mg(2+) binding. The tract at residues 212–220 is G2 motif; sequence DVLRSRTKT. T220 lines the Mg(2+) pocket. Positions 235–244 are G3 motif; it reads FRMVDVGGQR. A G4 motif region spans residues 306–313; sequence VMFLTSQS. The tract at residues 382–387 is G5 motif; the sequence is GYSGTC.

The protein in the N-terminal section; belongs to the G-alpha family. In the C-terminal section; belongs to the class-II aminoacyl-tRNA synthetase family. G proteins are composed of 3 units; alpha, beta and gamma. The alpha chain contains the guanine nucleotide binding site.

Guanine nucleotide-binding proteins (G proteins) are involved as modulators or transducers in various transmembrane signaling systems. This is Putative guanine nucleotide-binding protein subunit alpha from Leishmania donovani.